A 341-amino-acid polypeptide reads, in one-letter code: tRNA N6-adenosine threonylcarbamoyltransferase (341 aa).

His-116 and His-120 together coordinate Fe cation. Substrate contacts are provided by residues 139 to 143 (LVSGG), Asp-172, Gly-185, and Asn-274. Asp-302 is a binding site for Fe cation.

This sequence belongs to the KAE1 / TsaD family. Fe(2+) serves as cofactor.

It is found in the cytoplasm. It carries out the reaction L-threonylcarbamoyladenylate + adenosine(37) in tRNA = N(6)-L-threonylcarbamoyladenosine(37) in tRNA + AMP + H(+). In terms of biological role, required for the formation of a threonylcarbamoyl group on adenosine at position 37 (t(6)A37) in tRNAs that read codons beginning with adenine. Is involved in the transfer of the threonylcarbamoyl moiety of threonylcarbamoyl-AMP (TC-AMP) to the N6 group of A37, together with TsaE and TsaB. TsaD likely plays a direct catalytic role in this reaction. The sequence is that of tRNA N6-adenosine threonylcarbamoyltransferase from Vesicomyosocius okutanii subsp. Calyptogena okutanii (strain HA).